Consider the following 446-residue polypeptide: Glutamine synthetase (446 aa).

Residues 18–103 form the GS beta-grasp domain; that stretch reads ENVRYLRLQF…LICDVYKTDG (86 aa). Positions 110–446 constitute a GS catalytic domain; that stretch reads PRANLKRVLK…WERDQYMKQY (337 aa). Positions 134 and 136 each coordinate Mg(2+). Residue glutamate 186 coordinates ATP. Mg(2+)-binding residues include glutamate 191 and glutamate 198. Residues 242-243 and glycine 243 contribute to the L-glutamate site; that span reads NG. Histidine 247 is a Mg(2+) binding site. Serine 251 contacts ATP. Arginine 300, glutamate 306, and arginine 318 together coordinate L-glutamate. Arginine 318 and arginine 323 together coordinate ATP. A Mg(2+)-binding site is contributed by glutamate 335. Arginine 337 serves as a coordination point for L-glutamate.

Belongs to the glutamine synthetase family. Oligomer of 12 subunits arranged in the form of two hexagons. In its feedback-inhibited form, interacts with TnrA in order to block its DNA-binding activity. Mg(2+) serves as cofactor.

It localises to the cytoplasm. The catalysed reaction is L-glutamate + NH4(+) + ATP = L-glutamine + ADP + phosphate + H(+). With respect to regulation, inhibited by glutamine. Glutamine synthetase (GS) is an unusual multitasking protein that functions as an enzyme, a transcription coregulator, and a chaperone in ammonium assimilation and in the regulation of genes involved in nitrogen metabolism. It catalyzes the ATP-dependent biosynthesis of glutamine from glutamate and ammonia. Feedback-inhibited GlnA also interacts with and regulates the activity of the transcriptional regulator TnrA. During nitrogen limitation, TnrA is in its DNA-binding active state and turns on the transcription of genes required for nitrogen assimilation. Under conditions of nitrogen excess, feedback-inhibited GlnA forms a stable complex with TnrA, which inhibits its DNA-binding activity. In contrast, feedback-inhibited GlnA acts as a chaperone to stabilize the DNA-binding activity of GlnR, which represses the transcription of nitrogen assimilation genes. This chain is Glutamine synthetase, found in Staphylococcus aureus (strain MRSA252).